The sequence spans 611 residues: Dual specificity protein phosphatase CDC14AB (611 aa).

An a region spans residues Asp-23 to Glu-178. Residues Thr-179–Glu-192 are linker. The segment at Asn-193–Arg-359 is b. Residues Gly-194–Asp-352 form the Tyrosine-protein phosphatase domain. Catalysis depends on Cys-294, which acts as the Phosphocysteine intermediate. Positions Lys-408 to Tyr-611 are disordered. Positions Ser-456 to Ser-490 are enriched in low complexity. The span at Thr-491–Glu-511 shows a compositional bias: polar residues. The span at Ser-512–Ser-553 shows a compositional bias: low complexity. 2 stretches are compositionally biased toward polar residues: residues Lys-554–Ser-569 and Gly-591–Tyr-611.

This sequence belongs to the protein-tyrosine phosphatase family. Non-receptor class CDC14 subfamily.

It localises to the nucleus. The protein localises to the cytoplasm. It is found in the cytoskeleton. Its subcellular location is the microtubule organizing center. The protein resides in the centrosome. It localises to the spindle pole. The protein localises to the spindle. It is found in the cell projection. Its subcellular location is the kinocilium. The enzyme catalyses O-phospho-L-tyrosyl-[protein] + H2O = L-tyrosyl-[protein] + phosphate. It carries out the reaction O-phospho-L-seryl-[protein] + H2O = L-seryl-[protein] + phosphate. It catalyses the reaction O-phospho-L-threonyl-[protein] + H2O = L-threonyl-[protein] + phosphate. Its function is as follows. Dual-specificity phosphatase. Required for centrosome separation and productive cytokinesis during cell division. Dephosphorylates SIRT2 around early anaphase. May dephosphorylate the APC subunit FZR1/CDH1, thereby promoting APC-FZR1 dependent degradation of mitotic cyclins and subsequent exit from mitosis. The sequence is that of Dual specificity protein phosphatase CDC14AB (cdc14ab) from Danio rerio (Zebrafish).